A 405-amino-acid chain; its full sequence is CRS2-associated factor 1, mitochondrial (405 aa).

Residues 1 to 20 constitute a mitochondrion transit peptide; sequence MFLIRLSRHNPSSFTLLTRR. The tract at residues 32–75 is disordered; it reads RDLYNFQSPPPLSSSASENPDFNQKNNNKKKPKPQYRPPSSLEG. CRM domains follow at residues 157–255 and 277–373; these read ASLT…KRPK and DGLS…KEDD. Residues 384–405 are disordered; the sequence is SIDSDVDLSCSRGAQDSPDETT.

As to quaternary structure, part of large ribonucleo-protein complexes that include group IIB introns.

Its subcellular location is the mitochondrion. May be involved in the splicing of group IIB introns in mitochondria. This chain is CRS2-associated factor 1, mitochondrial, found in Arabidopsis thaliana (Mouse-ear cress).